A 273-amino-acid polypeptide reads, in one-letter code: Protein ALUMINUM SENSITIVE 3 (273 aa).

The next 7 helical transmembrane spans lie at 14–34 (WLIV…VVLL), 51–71 (IYSV…LQFI), 76–96 (NSGW…YTAG), 107–127 (YVAG…LVLL), 136–156 (YMIP…GVTM), 191–213 (ALVI…SLPG), and 228–248 (AIQL…VSSI).

The protein belongs to the UPF0014 family. As to expression, expressed in roots, leaves, stems, and flowers.

Its subcellular location is the cell membrane. Functionally, required for aluminum (Al) resistance/tolerance, probably by translocating Al from sensitive tissues such as growing roots to tissues less sensisitive to the toxic effects of Al. This Arabidopsis thaliana (Mouse-ear cress) protein is Protein ALUMINUM SENSITIVE 3 (ALS3).